We begin with the raw amino-acid sequence, 62 residues long: Sperm protamine P1 (62 aa).

The tract at residues 1-62 (MARYRRHSRS…RYSRRGRRRY (62 aa)) is disordered.

It belongs to the protamine P1 family. In terms of tissue distribution, testis.

It is found in the nucleus. The protein resides in the chromosome. In terms of biological role, protamines substitute for histones in the chromatin of sperm during the haploid phase of spermatogenesis. They compact sperm DNA into a highly condensed, stable and inactive complex. This Antechinomys laniger (Eastern jerboa marsupial) protein is Sperm protamine P1 (PRM1).